The following is a 95-amino-acid chain: Protein TusB (95 aa).

It belongs to the DsrH/TusB family. In terms of assembly, heterohexamer, formed by a dimer of trimers. The hexameric TusBCD complex contains 2 copies each of TusB, TusC and TusD. The TusBCD complex interacts with TusE.

It is found in the cytoplasm. Part of a sulfur-relay system required for 2-thiolation of 5-methylaminomethyl-2-thiouridine (mnm(5)s(2)U) at tRNA wobble positions. This chain is Protein TusB, found in Yersinia pseudotuberculosis serotype O:1b (strain IP 31758).